An 85-amino-acid polypeptide reads, in one-letter code: Platelet factor 4 (85 aa).

2 disulfides stabilise this stretch: Cys-25/Cys-51 and Cys-27/Cys-67. At Ser-41 the chain carries Phosphoserine. 76 to 82 (KKIIKRL) contributes to the heparin binding site.

Belongs to the intercrine alpha (chemokine CxC) family. Homotetramer. Interacts with TNFAIP6 (via Link domain). Interacts with CCR1. Interacts with CXCR3. Interacts with THBD; this interaction enhances generation of activated protein C.

It localises to the secreted. Chemokine released during platelet aggregation that plays a role in different biological processes including hematopoiesis, cell proliferation, differentiation, and activation. Acts via different functional receptors including CCR1, CXCR3A or CXCR3B. Upon interaction with CXCR3A receptor, induces activated T-lymphocytes migration mediated via downstream Ras/extracellular signal-regulated kinase (ERK) signaling. Neutralizes the anticoagulant effect of heparin by binding more strongly to heparin than to the chondroitin-4-sulfate chains of the carrier molecule. Plays a role in the inhibition of hematopoiesis and in the maintenance of hematopoietic stem cell (HSC) quiescence. Chemotactic for neutrophils and monocytes via CCR1. Inhibits endothelial cell proliferation. In cooperation with toll-like receptor 8/TLR8, induces chromatin remodeling and activates inflammatory gene expression via the TBK1-IRF5 axis. In addition, induces myofibroblast differentiation and collagen synthesis in different precursor cells, including endothelial cells, by stimulating endothelial-to-mesenchymal transition. Interacts with thrombomodulin/THBD to enhance the activation of protein C and thus potentiates its anticoagulant activity. The chain is Platelet factor 4 (PF4) from Ovis aries (Sheep).